Reading from the N-terminus, the 262-residue chain is Aminoglycoside (3'') (9) adenylyltransferase (262 aa).

The enzyme catalyses streptomycin + ATP = 3''-O-adenylylstreptomycin + diphosphate. It carries out the reaction spectinomycin + ATP = 9-O-adenylylspectinomycin + diphosphate. Mediates bacterial resistance to the antibiotics streptomycin and spectinomycin. The sequence is that of Aminoglycoside (3'') (9) adenylyltransferase from Klebsiella pneumoniae.